We begin with the raw amino-acid sequence, 348 residues long: 4-hydroxy-2-oxovalerate aldolase (348 aa).

In terms of domain architecture, Pyruvate carboxyltransferase spans 9-261 (ITVHDMTLRD…RTGVDVWKIQ (253 aa)). 17 to 18 (RD) lines the substrate pocket. Mn(2+) is bound at residue Asp-18. His-21 functions as the Proton acceptor in the catalytic mechanism. Residues Ser-171 and His-200 each contribute to the substrate site. Mn(2+)-binding residues include His-200 and His-202. Tyr-291 serves as a coordination point for substrate.

It belongs to the 4-hydroxy-2-oxovalerate aldolase family.

The enzyme catalyses (S)-4-hydroxy-2-oxopentanoate = acetaldehyde + pyruvate. The polypeptide is 4-hydroxy-2-oxovalerate aldolase (Ralstonia pickettii (strain 12J)).